The primary structure comprises 347 residues: tRNA N6-adenosine threonylcarbamoyltransferase (347 aa).

2 residues coordinate Fe cation: His-113 and His-117. Residues 136–140 (IVSGG), Asp-170, Gly-183, Asp-187, and Asn-282 contribute to the substrate site. A Fe cation-binding site is contributed by Asp-310.

This sequence belongs to the KAE1 / TsaD family. Fe(2+) serves as cofactor.

Its subcellular location is the cytoplasm. It catalyses the reaction L-threonylcarbamoyladenylate + adenosine(37) in tRNA = N(6)-L-threonylcarbamoyladenosine(37) in tRNA + AMP + H(+). In terms of biological role, required for the formation of a threonylcarbamoyl group on adenosine at position 37 (t(6)A37) in tRNAs that read codons beginning with adenine. Is involved in the transfer of the threonylcarbamoyl moiety of threonylcarbamoyl-AMP (TC-AMP) to the N6 group of A37, together with TsaE and TsaB. TsaD likely plays a direct catalytic role in this reaction. In Bifidobacterium longum (strain NCC 2705), this protein is tRNA N6-adenosine threonylcarbamoyltransferase.